Consider the following 258-residue polypeptide: Putative gamma-secretase subunit APH-1C (258 aa).

7 consecutive transmembrane segments (helical) span residues 5 to 25, 32 to 52, 71 to 91, 116 to 136, 161 to 181, 187 to 207, and 214 to 234; these read VFFG…LFTI, VIFL…SSMF, LLIF…LAYY, LLAY…SFVN, AFMT…FFDG, WYTL…TFLS, and LVTA…VAGG.

It belongs to the APH-1 family. In terms of assembly, potential component of the gamma-secretase complex.

The protein resides in the membrane. In terms of biological role, potential subunit of the gamma-secretase complex, an endoprotease complex that catalyzes the intramembrane cleavage of integral proteins such as Notch receptors and APP (amyloid-beta precursor protein). In Mus musculus (Mouse), this protein is Putative gamma-secretase subunit APH-1C (Aph1c).